The following is a 102-amino-acid chain: Beta-defensin 116 (102 aa).

The signal sequence occupies residues 1–23 (MSVMKPCLMTIAILMILAQKTPG). 3 cysteine pairs are disulfide-bonded: Cys40/Cys67, Cys47/Cys61, and Cys51/Cys68. Residues 83–102 (EDYDSNSNLSVTNSSSYSHI) form a disordered region. Residues 87 to 102 (SNSNLSVTNSSSYSHI) are compositionally biased toward low complexity.

This sequence belongs to the beta-defensin family.

The protein resides in the secreted. Functionally, has antibacterial activity. This is Beta-defensin 116 (DEFB116) from Homo sapiens (Human).